The primary structure comprises 219 residues: Protein-L-isoaspartate O-methyltransferase (219 aa).

The active site involves serine 67.

It belongs to the methyltransferase superfamily. L-isoaspartyl/D-aspartyl protein methyltransferase family.

The protein resides in the cytoplasm. The catalysed reaction is [protein]-L-isoaspartate + S-adenosyl-L-methionine = [protein]-L-isoaspartate alpha-methyl ester + S-adenosyl-L-homocysteine. In terms of biological role, catalyzes the methyl esterification of L-isoaspartyl residues in peptides and proteins that result from spontaneous decomposition of normal L-aspartyl and L-asparaginyl residues. It plays a role in the repair and/or degradation of damaged proteins. This Cereibacter sphaeroides (strain ATCC 17029 / ATH 2.4.9) (Rhodobacter sphaeroides) protein is Protein-L-isoaspartate O-methyltransferase.